The sequence spans 473 residues: Ribulose bisphosphate carboxylase large chain (473 aa).

Residues asparagine 116 and threonine 166 each contribute to the substrate site. Residue lysine 168 is the Proton acceptor of the active site. Lysine 170 lines the substrate pocket. Mg(2+) contacts are provided by lysine 194, aspartate 196, and glutamate 197. Lysine 194 is subject to N6-carboxylysine. The active-site Proton acceptor is the histidine 287. Substrate is bound by residues arginine 288, histidine 320, and serine 372.

This sequence belongs to the RuBisCO large chain family. Type I subfamily. In terms of assembly, heterohexadecamer of 8 large chains and 8 small chains. Mg(2+) is required as a cofactor.

The catalysed reaction is 2 (2R)-3-phosphoglycerate + 2 H(+) = D-ribulose 1,5-bisphosphate + CO2 + H2O. It catalyses the reaction D-ribulose 1,5-bisphosphate + O2 = 2-phosphoglycolate + (2R)-3-phosphoglycerate + 2 H(+). In terms of biological role, ruBisCO catalyzes two reactions: the carboxylation of D-ribulose 1,5-bisphosphate, the primary event in carbon dioxide fixation, as well as the oxidative fragmentation of the pentose substrate. Both reactions occur simultaneously and in competition at the same active site. In Nitrosomonas europaea (strain ATCC 19718 / CIP 103999 / KCTC 2705 / NBRC 14298), this protein is Ribulose bisphosphate carboxylase large chain.